Reading from the N-terminus, the 511-residue chain is ATP synthase subunit alpha, plastid (511 aa).

170–177 is an ATP binding site; it reads GDRQTGKT.

This sequence belongs to the ATPase alpha/beta chains family. F-type ATPases have 2 components, CF(1) - the catalytic core - and CF(0) - the membrane proton channel. CF(1) has five subunits: alpha(3), beta(3), gamma(1), delta(1), epsilon(1). CF(0) has four main subunits: a, b, b' and c.

The protein resides in the plastid membrane. It catalyses the reaction ATP + H2O + 4 H(+)(in) = ADP + phosphate + 5 H(+)(out). Its function is as follows. Produces ATP from ADP in the presence of a proton gradient across the membrane. The alpha chain is a regulatory subunit. The sequence is that of ATP synthase subunit alpha, plastid from Cuscuta reflexa (Southern Asian dodder).